Reading from the N-terminus, the 345-residue chain is Dihydroorotase (345 aa).

2 residues coordinate Zn(2+): histidine 13 and histidine 15. Substrate contacts are provided by residues 15 to 17 (HLR) and asparagine 41. Zn(2+)-binding residues include lysine 99, histidine 136, and histidine 174. At lysine 99 the chain carries N6-carboxylysine. Position 136 (histidine 136) interacts with substrate. Leucine 219 contacts substrate. Position 247 (aspartate 247) interacts with Zn(2+). Aspartate 247 is an active-site residue. Substrate is bound by residues histidine 251 and alanine 263.

The protein belongs to the metallo-dependent hydrolases superfamily. DHOase family. Class II DHOase subfamily. In terms of assembly, homodimer. Zn(2+) serves as cofactor.

The enzyme catalyses (S)-dihydroorotate + H2O = N-carbamoyl-L-aspartate + H(+). It participates in pyrimidine metabolism; UMP biosynthesis via de novo pathway; (S)-dihydroorotate from bicarbonate: step 3/3. In terms of biological role, catalyzes the reversible cyclization of carbamoyl aspartate to dihydroorotate. This is Dihydroorotase from Hahella chejuensis (strain KCTC 2396).